The chain runs to 805 residues: Acetyl-CoA decarbonylase/synthase complex subunit alpha 2 (805 aa).

Positions 72, 75, 76, 78, 83, and 93 each coordinate [4Fe-4S] cluster. Residue H116 coordinates CO. Residues H249, C277, and C322 each contribute to the [Ni-4Fe-4S] cluster site. 4Fe-4S ferredoxin-type domains follow at residues 407-435 and 445-474; these read EEFK…IPEA and EYLE…LNVL. [4Fe-4S] cluster is bound by residues C416, C419, C422, C426, C454, C457, C460, and C464. The [Ni-4Fe-4S] cluster site is built by C522, C551, and C586.

Belongs to the Ni-containing carbon monoxide dehydrogenase family. Heterotetramer of two alpha and two epsilon subunits. The ACDS complex is made up of alpha, epsilon, beta, gamma and delta subunits with a probable stoichiometry of (alpha(2)epsilon(2))(4)-beta(8)-(gamma(1)delta(1))(8). [4Fe-4S] cluster serves as cofactor. It depends on [Ni-4Fe-4S] cluster as a cofactor.

It carries out the reaction CO + 2 oxidized [2Fe-2S]-[ferredoxin] + H2O = 2 reduced [2Fe-2S]-[ferredoxin] + CO2 + 2 H(+). Its pathway is one-carbon metabolism; methanogenesis from acetate. Functionally, part of the ACDS complex that catalyzes the reversible cleavage of acetyl-CoA, allowing growth on acetate as sole source of carbon and energy. The alpha-epsilon subcomponent functions as a carbon monoxide dehydrogenase. The protein is Acetyl-CoA decarbonylase/synthase complex subunit alpha 2 of Methanosarcina acetivorans (strain ATCC 35395 / DSM 2834 / JCM 12185 / C2A).